Here is a 184-residue protein sequence, read N- to C-terminus: Holliday junction branch migration complex subunit RuvA (184 aa).

The tract at residues methionine 1–isoleucine 64 is domain I. A domain II region spans residues lysine 65–asparagine 137. Residue asparagine 137 is a region of interest, flexible linker. A domain III region spans residues serine 138–alanine 184.

It belongs to the RuvA family. As to quaternary structure, homotetramer. Forms an RuvA(8)-RuvB(12)-Holliday junction (HJ) complex. HJ DNA is sandwiched between 2 RuvA tetramers; dsDNA enters through RuvA and exits via RuvB. An RuvB hexamer assembles on each DNA strand where it exits the tetramer. Each RuvB hexamer is contacted by two RuvA subunits (via domain III) on 2 adjacent RuvB subunits; this complex drives branch migration. In the full resolvosome a probable DNA-RuvA(4)-RuvB(12)-RuvC(2) complex forms which resolves the HJ.

The protein resides in the cytoplasm. In terms of biological role, the RuvA-RuvB-RuvC complex processes Holliday junction (HJ) DNA during genetic recombination and DNA repair, while the RuvA-RuvB complex plays an important role in the rescue of blocked DNA replication forks via replication fork reversal (RFR). RuvA specifically binds to HJ cruciform DNA, conferring on it an open structure. The RuvB hexamer acts as an ATP-dependent pump, pulling dsDNA into and through the RuvAB complex. HJ branch migration allows RuvC to scan DNA until it finds its consensus sequence, where it cleaves and resolves the cruciform DNA. The protein is Holliday junction branch migration complex subunit RuvA of Campylobacter fetus subsp. fetus (strain 82-40).